A 257-amino-acid chain; its full sequence is MNDSLVIRGIEFKSRLWVGTGKYKSFEETARAIEASGTDVVTVAVRRVNIIDRSKENLLDYIDPKKYKILPNTAGCYTVEDALRYARLAREAGVSDMVKLEVIGDEKTLFPDVCGLLKATEILAKEGFIVFPYTNDDPITAKRLVDAGAAAVMPLGAPIGSGLGIRNPYNIKIILETVNIPVIVDAGVGTASDVSIAMELGCDAVLVNTAIAGAKDPIMMAEALKHACIAGRLAYRAGRIPKKLYASASSPIEGMLT.

Lys-99 serves as the catalytic Schiff-base intermediate with DXP. 1-deoxy-D-xylulose 5-phosphate is bound by residues Gly-160, 186-187 (AG), and 208-209 (NT).

Belongs to the ThiG family. As to quaternary structure, homotetramer. Forms heterodimers with either ThiH or ThiS.

It is found in the cytoplasm. The enzyme catalyses [ThiS sulfur-carrier protein]-C-terminal-Gly-aminoethanethioate + 2-iminoacetate + 1-deoxy-D-xylulose 5-phosphate = [ThiS sulfur-carrier protein]-C-terminal Gly-Gly + 2-[(2R,5Z)-2-carboxy-4-methylthiazol-5(2H)-ylidene]ethyl phosphate + 2 H2O + H(+). Its pathway is cofactor biosynthesis; thiamine diphosphate biosynthesis. Catalyzes the rearrangement of 1-deoxy-D-xylulose 5-phosphate (DXP) to produce the thiazole phosphate moiety of thiamine. Sulfur is provided by the thiocarboxylate moiety of the carrier protein ThiS. In vitro, sulfur can be provided by H(2)S. This is Thiazole synthase from Thermodesulfovibrio yellowstonii (strain ATCC 51303 / DSM 11347 / YP87).